The sequence spans 858 residues: Cone cGMP-specific 3',5'-cyclic phosphodiesterase subunit alpha' (858 aa).

GAF domains follow at residues 75-224 (TPEQ…SIIL) and 256-433 (DVER…GWSL). Residues Ser-97, Asp-116, 169 to 172 (DKQT), and Thr-176 contribute to the 3',5'-cyclic GMP site. Residues 486 to 819 (EEKQLVAILK…VEWKSLADEY (334 aa)) form the PDEase domain. His-562 serves as the catalytic Proton donor. 4 residues coordinate a divalent metal cation: His-566, His-602, Asp-603, and Asp-723. The segment covering 830–852 (AKKQEGGAEKAAEDSGGGDDKKS) has biased composition (basic and acidic residues). The disordered stretch occupies residues 830–858 (AKKQEGGAEKAAEDSGGGDDKKSKTCLML). Cys-855 bears the Cysteine methyl ester mark. The S-geranylgeranyl cysteine moiety is linked to residue Cys-855. Positions 856–858 (LML) are cleaved as a propeptide — removed in mature form.

The protein belongs to the cyclic nucleotide phosphodiesterase family. Composed of two alpha' subunits that are associated with 3 smaller proteins of 11, 13, and 15 kDa. A divalent metal cation is required as a cofactor.

It is found in the cell membrane. It carries out the reaction 3',5'-cyclic GMP + H2O = GMP + H(+). Its function is as follows. As cone-specific cGMP phosphodiesterase, it plays an essential role in light detection and cone phototransduction by rapidly decreasing intracellular levels of cGMP. The sequence is that of Cone cGMP-specific 3',5'-cyclic phosphodiesterase subunit alpha' (PDE6C) from Homo sapiens (Human).